The sequence spans 534 residues: Allene oxide synthase 1, chloroplastic (534 aa).

Disordered stretches follow at residues 1 to 31 (MAST…SSYR) and 43 to 71 (EIPP…LPAQ). A chloroplast-targeting transit peptide spans 1-69 (MASTSLSLPS…SPPVKQAKLP (69 aa)). Low complexity-rich tracts occupy residues 17–31 (SHTS…SSYR) and 43–62 (EIPP…SSPP). Lysine 149, histidine 180, and lysine 184 together coordinate heme b. The (13S)-hydroperoxy-(9Z,11E)-octadecadienoate site is built by asparagine 337 and lysine 343. (13S)-hydroperoxy-(9Z,11E,15Z)-octadecatrienoate is bound at residue asparagine 337. 2 residues coordinate heme b: lysine 485 and cysteine 487.

This sequence belongs to the cytochrome P450 family. Heme b is required as a cofactor. Expressed in flowers. Detected in stems and roots, but not in leaves and fruits under non-inducing conditions.

It is found in the plastid. The protein localises to the chloroplast. The enzyme catalyses (13S)-hydroperoxy-(9Z,11E,15Z)-octadecatrienoate = (9Z,13S,15Z)-12,13-epoxyoctadeca-9,11,15-trienoate + H2O. It carries out the reaction (13S)-hydroperoxy-(9Z,11E)-octadecadienoate = (9Z,13S)-12,13-epoxyoctadeca-9,11-dienoate + H2O. Cytochrome P450 of the CYP74A subfamily involved in the biosynthesis of jasmonic acid from lipoxygenase-derived hydroperoxides of free fatty acids. Catalyzes the synthesis of unstable allene oxide, which is further converted spontaneously by hydrolysis or cyclization. Can use 13S-hydroperoxy-9(Z),11(E),15(Z)-octadecatrienoic acid (13-HPOT) and 13S-hydroperoxy-9(Z),11(E)-octadecadienoic acid (13-HPOD) as substrates. The chain is Allene oxide synthase 1, chloroplastic from Solanum lycopersicum (Tomato).